A 241-amino-acid polypeptide reads, in one-letter code: Venom nerve growth factor (241 aa).

The signal sequence occupies residues 1–18 (MSMLCYTLIIAFLIGIWA). Residues 19–122 (APKSEDNVPL…SLNRNIRAKR (104 aa)) constitute a propeptide that is removed on maturation. Intrachain disulfides connect Cys-136-Cys-201, Cys-179-Cys-229, and Cys-189-Cys-231. Residue Asn-145 is glycosylated (N-linked (GlcNAc...) asparagine).

Belongs to the NGF-beta family. As to quaternary structure, homodimer; non-covalently linked. As to expression, expressed by the venom gland.

It is found in the secreted. Nerve growth factor is important for the development and maintenance of the sympathetic and sensory nervous systems. It stimulates division and differentiation of sympathetic and embryonic sensory neurons as well as basal forebrain cholinergic neurons in the brain. Its relevance in the snake venom is not clear. However, it has been shown to inhibit metalloproteinase-dependent proteolysis of platelet glycoprotein Ib alpha, suggesting a metalloproteinase inhibition to prevent metalloprotease autodigestion and/or protection against prey proteases. Binds a lipid between the two protein chains in the homodimer. The lipid-bound form promotes histamine relase from mouse mast cells, contrary to the lipid-free form. This is Venom nerve growth factor from Crotalus durissus terrificus (South American rattlesnake).